The primary structure comprises 185 residues: Ribosome-recycling factor (185 aa).

This sequence belongs to the RRF family.

The protein resides in the cytoplasm. Its function is as follows. Responsible for the release of ribosomes from messenger RNA at the termination of protein biosynthesis. May increase the efficiency of translation by recycling ribosomes from one round of translation to another. In Haemophilus influenzae (strain 86-028NP), this protein is Ribosome-recycling factor.